The sequence spans 78 residues: Rubredoxin (78 aa).

One can recognise a Rubredoxin-like domain in the interval 23–74 (DARLECKICWWEYDPEVGDPVWQIAPGTSFSALPAHWRCPNCDGEAEQFMVL). Cys28, Cys31, Cys61, and Cys64 together coordinate Fe cation.

The protein belongs to the rubredoxin family. Requires Fe(3+) as cofactor.

In terms of biological role, rubredoxin is a small nonheme, iron protein lacking acid-labile sulfide. Its single Fe, chelated to 4 Cys, functions as an electron acceptor and may also stabilize the conformation of the molecule. Could be involved in hydrogenase-linked redox processes. The chain is Rubredoxin (hoxR) from Cupriavidus necator (strain ATCC 17699 / DSM 428 / KCTC 22496 / NCIMB 10442 / H16 / Stanier 337) (Ralstonia eutropha).